We begin with the raw amino-acid sequence, 358 residues long: MPRLLVAASGTGGHLFPALSVADALLEPWSVRWVGVPDRLETSLVPGRYPLTTVKAGGLQGRGLRKLIQLIQLLAASGSIRRLIQRERIDAVFTTGGYIAAPAILAARWCGIPVVLHESNAIPGRVTRLLGRFCTRVAVGLEAAAPRIQGCRAVVTGTPVRAAFLQQQSLPTWVPQGSGPLLVVIGGSQGALGLNRMTRELFPSLLSSGCRIVHLTGSNDPDVGCIEHPLLVERPFSDEIPALLQHADLAISRAGAGSLSELAVSGTPTVLVPFPQAADRHQDANAVCAAAVAAAVIVHQHDPSETTLRDTVWRLLGSKLPGGDPGANPLPEMGQAMRELGVEDADQKLVTLLEGLLN.

Residues 11 to 13, asparagine 120, arginine 161, serine 188, and glutamine 282 each bind UDP-N-acetyl-alpha-D-glucosamine; that span reads TGG.

The protein belongs to the glycosyltransferase 28 family. MurG subfamily.

It is found in the cell inner membrane. It catalyses the reaction di-trans,octa-cis-undecaprenyl diphospho-N-acetyl-alpha-D-muramoyl-L-alanyl-D-glutamyl-meso-2,6-diaminopimeloyl-D-alanyl-D-alanine + UDP-N-acetyl-alpha-D-glucosamine = di-trans,octa-cis-undecaprenyl diphospho-[N-acetyl-alpha-D-glucosaminyl-(1-&gt;4)]-N-acetyl-alpha-D-muramoyl-L-alanyl-D-glutamyl-meso-2,6-diaminopimeloyl-D-alanyl-D-alanine + UDP + H(+). It participates in cell wall biogenesis; peptidoglycan biosynthesis. Functionally, cell wall formation. Catalyzes the transfer of a GlcNAc subunit on undecaprenyl-pyrophosphoryl-MurNAc-pentapeptide (lipid intermediate I) to form undecaprenyl-pyrophosphoryl-MurNAc-(pentapeptide)GlcNAc (lipid intermediate II). In Synechococcus sp. (strain CC9311), this protein is UDP-N-acetylglucosamine--N-acetylmuramyl-(pentapeptide) pyrophosphoryl-undecaprenol N-acetylglucosamine transferase.